The sequence spans 227 residues: Uracil-DNA glycosylase (227 aa).

Catalysis depends on aspartate 68, which acts as the Proton acceptor.

Belongs to the uracil-DNA glycosylase (UDG) superfamily. UNG family.

The protein resides in the cytoplasm. The enzyme catalyses Hydrolyzes single-stranded DNA or mismatched double-stranded DNA and polynucleotides, releasing free uracil.. Functionally, excises uracil residues from the DNA which can arise as a result of misincorporation of dUMP residues by DNA polymerase or due to deamination of cytosine. This is Uracil-DNA glycosylase from Mycobacterium ulcerans (strain Agy99).